Consider the following 169-residue polypeptide: Probable inosine/xanthosine triphosphatase (169 aa).

Asp-58 serves as a coordination point for Mg(2+).

Belongs to the YjjX NTPase family. In terms of assembly, homodimer. Mg(2+) is required as a cofactor. Requires Mn(2+) as cofactor.

It catalyses the reaction XTP + H2O = XDP + phosphate + H(+). The enzyme catalyses ITP + H2O = IDP + phosphate + H(+). In terms of biological role, phosphatase that hydrolyzes non-canonical purine nucleotides such as XTP and ITP to their respective diphosphate derivatives. Probably excludes non-canonical purines from DNA/RNA precursor pool, thus preventing their incorporation into DNA/RNA and avoiding chromosomal lesions. The chain is Probable inosine/xanthosine triphosphatase from Archaeoglobus fulgidus (strain ATCC 49558 / DSM 4304 / JCM 9628 / NBRC 100126 / VC-16).